The primary structure comprises 146 residues: U-scoloptoxin(16)-Er1a (146 aa).

A signal peptide spans 1 to 26 (MNTVSVVQFLAVGCAVFVLYGRGVFA).

Belongs to the scoloptoxin-16 family. Contains 4 disulfide bonds. In terms of tissue distribution, expressed by the venom gland.

It is found in the secreted. The polypeptide is U-scoloptoxin(16)-Er1a (Ethmostigmus rubripes (Giant centipede)).